Here is a 277-residue protein sequence, read N- to C-terminus: tRNA (guanine-N(7)-)-methyltransferase (277 aa).

The segment at 1-37 (MAGTETGDAAGTEAPQPQKRYYRQRAHSNPMADHTLR) is disordered. Ser28 carries the post-translational modification Phosphoserine. Residues Gly85, Glu108, Arg110, Asn141, Ala142, and Leu161 each contribute to the S-adenosyl-L-methionine site. Asp164 is an active-site residue. Residues 165 to 173 (PHFKRTKHK) form an alphaC helix region. Positions 239 and 241 each coordinate S-adenosyl-L-methionine. Residues 239 to 247 (TEEGKKVLR) form an alpha6 helix region.

This sequence belongs to the class I-like SAM-binding methyltransferase superfamily. TrmB family. As to quaternary structure, catalytic component of the METTL1-WDR4 complex, composed of METTL1 and WDR4. Phosphorylation at Ser-28 by PKB/AKT1 inactivates its methyltransferase activity via a steric interference mechanism in the active site that locally disrupts the catalytic center. Phosphorylation at Ser-28 does not affect the interaction with WDR4.

The protein resides in the nucleus. It catalyses the reaction guanosine(46) in tRNA + S-adenosyl-L-methionine = N(7)-methylguanosine(46) in tRNA + S-adenosyl-L-homocysteine. It carries out the reaction a guanosine in mRNA + S-adenosyl-L-methionine = an N(7)-methylguanosine in mRNA + S-adenosyl-L-homocysteine. The catalysed reaction is a guanosine in miRNA + S-adenosyl-L-methionine = an N(7)-methylguanosine in miRNA + S-adenosyl-L-homocysteine. It participates in tRNA modification; N(7)-methylguanine-tRNA biosynthesis. Catalytic component of METTL1-WDR4 methyltransferase complex that mediates the formation of N(7)-methylguanine in a subset of RNA species, such as tRNAs, mRNAs and microRNAs (miRNAs). Catalyzes the formation of N(7)-methylguanine at position 46 (m7G46) in a large subset of tRNAs that contain the 5'-RAGGU-3' motif within the variable loop. M7G46 interacts with C13-G22 in the D-loop to stabilize tRNA tertiary structure and protect tRNAs from decay. Also acts as a methyltransferase for a subset of internal N(7)-methylguanine in mRNAs. Internal N(7)-methylguanine methylation of mRNAs in response to stress promotes their relocalization to stress granules, thereby suppressing their translation. Also methylates a specific subset of miRNAs, such as let-7. N(7)-methylguanine methylation of let-7 miRNA promotes let-7 miRNA processing by disrupting an inhibitory secondary structure within the primary miRNA transcript (pri-miRNA). Acts as a regulator of embryonic stem cell self-renewal and differentiation. In Bos taurus (Bovine), this protein is tRNA (guanine-N(7)-)-methyltransferase.